Consider the following 262-residue polypeptide: Ribosomal RNA small subunit methyltransferase A (262 aa).

The S-adenosyl-L-methionine site is built by Asn-12, Leu-14, Gly-38, Glu-60, Asp-83, and Asn-102.

The protein belongs to the class I-like SAM-binding methyltransferase superfamily. rRNA adenine N(6)-methyltransferase family. RsmA subfamily.

Its subcellular location is the cytoplasm. The catalysed reaction is adenosine(1518)/adenosine(1519) in 16S rRNA + 4 S-adenosyl-L-methionine = N(6)-dimethyladenosine(1518)/N(6)-dimethyladenosine(1519) in 16S rRNA + 4 S-adenosyl-L-homocysteine + 4 H(+). In terms of biological role, specifically dimethylates two adjacent adenosines (A1518 and A1519) in the loop of a conserved hairpin near the 3'-end of 16S rRNA in the 30S particle. May play a critical role in biogenesis of 30S subunits. The sequence is that of Ribosomal RNA small subunit methyltransferase A from Pelagibacter ubique (strain HTCC1062).